Consider the following 168-residue polypeptide: Crossover junction endodeoxyribonuclease RuvC (168 aa).

Active-site residues include aspartate 10, glutamate 70, and aspartate 143. Mg(2+)-binding residues include aspartate 10, glutamate 70, and aspartate 143.

Belongs to the RuvC family. Homodimer which binds Holliday junction (HJ) DNA. The HJ becomes 2-fold symmetrical on binding to RuvC with unstacked arms; it has a different conformation from HJ DNA in complex with RuvA. In the full resolvosome a probable DNA-RuvA(4)-RuvB(12)-RuvC(2) complex forms which resolves the HJ. The cofactor is Mg(2+).

Its subcellular location is the cytoplasm. It catalyses the reaction Endonucleolytic cleavage at a junction such as a reciprocal single-stranded crossover between two homologous DNA duplexes (Holliday junction).. The RuvA-RuvB-RuvC complex processes Holliday junction (HJ) DNA during genetic recombination and DNA repair. Endonuclease that resolves HJ intermediates. Cleaves cruciform DNA by making single-stranded nicks across the HJ at symmetrical positions within the homologous arms, yielding a 5'-phosphate and a 3'-hydroxyl group; requires a central core of homology in the junction. The consensus cleavage sequence is 5'-(A/T)TT(C/G)-3'. Cleavage occurs on the 3'-side of the TT dinucleotide at the point of strand exchange. HJ branch migration catalyzed by RuvA-RuvB allows RuvC to scan DNA until it finds its consensus sequence, where it cleaves and resolves the cruciform DNA. This Roseiflexus sp. (strain RS-1) protein is Crossover junction endodeoxyribonuclease RuvC.